A 315-amino-acid polypeptide reads, in one-letter code: Olfactory receptor 3A1 (315 aa).

Over 1 to 28 the chain is Extracellular; sequence MQPESGANGTVIAEFILLGLLEAPGLQP. The N-linked (GlcNAc...) asparagine glycan is linked to Asn8. The helical transmembrane segment at 29–52 threads the bilayer; sequence VVFVLFLFAYLVTVGGNLSILAAV. Over 53 to 60 the chain is Cytoplasmic; it reads LVEPELHT. A helical membrane pass occupies residues 61–82; the sequence is PMYFFLGNLSVLDVGCISVTVP. Residues 83–103 lie on the Extracellular side of the membrane; the sequence is SMLSRLLSRKRAVPCGACLTQ. A disulfide bond links Cys100 and Cys192. The chain crosses the membrane as a helical span at residues 104-123; that stretch reads LFFFHLFVGVDCFLLIAMAY. The Cytoplasmic segment spans residues 124 to 143; sequence DRFLAICRPLTYSTRMSQTV. A helical membrane pass occupies residues 144–161; it reads QRMLVAASWACAFTNALT. Over 162–199 the chain is Extracellular; the sequence is HTVAMSTLNFCGPNVINHFYCDLPQLCQLSCSSTQLSE. A helical transmembrane segment spans residues 200 to 223; the sequence is LLLFAVGFIMAGTSMALIVISYIH. The Cytoplasmic portion of the chain corresponds to 224 to 240; that stretch reads VAAAVLRIRSVEGRKKA. The chain crosses the membrane as a helical span at residues 241–264; the sequence is FSTCGSHLTVVAIFYGSGIFNYMR. Residues 265 to 275 are Extracellular-facing; it reads LGSTKLSDKDK. Residues 276–295 form a helical membrane-spanning segment; that stretch reads AVGIFNTVINPMLNPIIYSF. The Cytoplasmic segment spans residues 296 to 315; it reads RNPDVQSAIWRMLTGRRSLA.

Belongs to the G-protein coupled receptor 1 family.

Its subcellular location is the cell membrane. Its function is as follows. Odorant receptor. The chain is Olfactory receptor 3A1 (OR3A1) from Gorilla gorilla gorilla (Western lowland gorilla).